Here is a 174-residue protein sequence, read N- to C-terminus: MNHDKSPIILIGFMGTGKSTIGKYVADEQNLSFIDIDSYIEEKYKLTIPEIFCKHGEQYFRNLEFTCLQECINTADIIATGGGIIESEEAFNFLKNQKNIIWLDCNIDIIYSRINDDPHRPNANNKTIKQLNDLYCSRNLRYNEIAFKKFDSHLLSISEIYYELLNLIKASDQY.

Glycine 15–threonine 20 lines the ATP pocket. Serine 19 lines the Mg(2+) pocket. Positions 37, 61, and 82 each coordinate substrate. An ATP-binding site is contributed by arginine 120. Arginine 138 provides a ligand contact to substrate.

The protein belongs to the shikimate kinase family. In terms of assembly, monomer. Mg(2+) is required as a cofactor.

The protein resides in the cytoplasm. It carries out the reaction shikimate + ATP = 3-phosphoshikimate + ADP + H(+). It participates in metabolic intermediate biosynthesis; chorismate biosynthesis; chorismate from D-erythrose 4-phosphate and phosphoenolpyruvate: step 5/7. In terms of biological role, catalyzes the specific phosphorylation of the 3-hydroxyl group of shikimic acid using ATP as a cosubstrate. The sequence is that of Shikimate kinase from Staphylococcus aureus (strain NCTC 8325 / PS 47).